We begin with the raw amino-acid sequence, 959 residues long: Kinesin-like protein NACK1 (959 aa).

Residues 1–28 (MTVRTPGTPASKIDKTPATTPNGHRGRE) form a disordered region. The Kinesin motor domain maps to 30-353 (KIVVTVRLRP…LYFATRAKEV (324 aa)). ATP is bound at residue 117–124 (GQTSSGKT). At T145 the chain carries Phosphothreonine. The stretch at 362 to 429 (VVSDKQLVKH…LRRKLQEEQG (68 aa)) forms a coiled coil. Disordered regions lie at residues 417–438 (VDELRRKLQEEQGPKPSESVSP), 451–473 (SPNLEEKAPVRSERTRNTMGRQS), 598–640 (LPSN…FLKS), and 658–700 (NRAP…SVNM). Basic and acidic residues-rich tracts occupy residues 418–429 (DELRRKLQEEQG) and 454–466 (LEEKAPVRSERTR). A coiled-coil region spans residues 557–598 (KSVSANLKEEIARLHSQGSTIADLEEQLENVQKSLDKLVMSL). Residues 600 to 611 (SNNDQQSNNDTT) are compositionally biased toward low complexity. Basic residues predominate over residues 613–623 (KAKHPSKKKKL). The span at 630 to 640 (NSINRQNFLKS) shows a compositional bias: polar residues. Phosphothreonine occurs at positions 675 and 690. Residues 685–756 (SSKEGTPYRR…EANEAAGYNL (72 aa)) form a required for the binding to NPK1 region.

It belongs to the TRAFAC class myosin-kinesin ATPase superfamily. Kinesin family. KIN-7 subfamily. In terms of assembly, interacts (via C-terminus) with NPK1 (via C-terminus). In terms of processing, phosphorylated at Thr-145, Thr-675 and Thr-690 by CDKAs and CDKBs. The phosphorylation occurs before metaphase and inhibits the interaction with NPK1 preventing the transition to cytokinesis.

Its subcellular location is the cytoplasm. It localises to the nucleus. The protein localises to the cytoskeleton. The protein resides in the phragmoplast. Its function is as follows. Probable plus end-directed motor protein that functions in the NACK-PQR (NPK1-NQK1/MEK1-NRK1) MAP kinase signaling pathway, which is essential for somatic cell cytokinesis, especially for the cell-plate formation and its expansion. Regulates the activity and the localization of NPK1 by association through the non-catalytic region of the kinase. The chain is Kinesin-like protein NACK1 (NACK1) from Nicotiana tabacum (Common tobacco).